Reading from the N-terminus, the 461-residue chain is Dihydrofolate reductase (461 aa).

The region spanning 233–447 is the DHFR domain; the sequence is DLTMIVAVSS…VEIEFELYGK (215 aa). Residues alanine 239 and 246-252 each bind NADP(+); that span reads GIGKKNS. Residue 260–265 participates in substrate binding; that stretch reads EMAYFA. 292-294 serves as a coordination point for NADP(+); the sequence is RSC. Arginine 308 lines the substrate pocket. NADP(+) contacts are provided by residues 314–316 and 365–372; these read TRN and GGSFLYGS.

It belongs to the dihydrofolate reductase family.

The catalysed reaction is (6S)-5,6,7,8-tetrahydrofolate + NADP(+) = 7,8-dihydrofolate + NADPH + H(+). It functions in the pathway cofactor biosynthesis; tetrahydrofolate biosynthesis; 5,6,7,8-tetrahydrofolate from 7,8-dihydrofolate: step 1/1. Its function is as follows. Key enzyme in folate metabolism. Catalyzes an essential reaction for de novo glycine and purine synthesis, and for DNA precursor synthesis. This chain is Dihydrofolate reductase (dfr1), found in Schizosaccharomyces pombe (strain 972 / ATCC 24843) (Fission yeast).